A 121-amino-acid chain; its full sequence is Ribonuclease P protein component (121 aa).

The protein belongs to the RnpA family. As to quaternary structure, consists of a catalytic RNA component (M1 or rnpB) and a protein subunit.

It carries out the reaction Endonucleolytic cleavage of RNA, removing 5'-extranucleotides from tRNA precursor.. RNaseP catalyzes the removal of the 5'-leader sequence from pre-tRNA to produce the mature 5'-terminus. It can also cleave other RNA substrates such as 4.5S RNA. The protein component plays an auxiliary but essential role in vivo by binding to the 5'-leader sequence and broadening the substrate specificity of the ribozyme. The sequence is that of Ribonuclease P protein component from Chromobacterium violaceum (strain ATCC 12472 / DSM 30191 / JCM 1249 / CCUG 213 / NBRC 12614 / NCIMB 9131 / NCTC 9757 / MK).